We begin with the raw amino-acid sequence, 109 residues long: Large ribosomal subunit protein uL24 (109 aa).

Belongs to the universal ribosomal protein uL24 family. Part of the 50S ribosomal subunit.

Functionally, one of two assembly initiator proteins, it binds directly to the 5'-end of the 23S rRNA, where it nucleates assembly of the 50S subunit. Its function is as follows. One of the proteins that surrounds the polypeptide exit tunnel on the outside of the subunit. This chain is Large ribosomal subunit protein uL24, found in Legionella pneumophila subsp. pneumophila (strain Philadelphia 1 / ATCC 33152 / DSM 7513).